A 520-amino-acid polypeptide reads, in one-letter code: Cholesterol side-chain cleavage enzyme, mitochondrial (520 aa).

The transit peptide at 1 to 39 (MLARGLALRSVLVKGCQPFLSAPRECPGHPRVGTGEGAC) directs the protein to the mitochondrion. Residue Cys461 coordinates heme.

This sequence belongs to the cytochrome P450 family. Interacts with FDX1/adrenodoxin. Requires heme as cofactor.

It localises to the mitochondrion inner membrane. The enzyme catalyses 6 reduced [adrenodoxin] + cholesterol + 3 O2 + 6 H(+) = 4-methylpentanal + pregnenolone + 6 oxidized [adrenodoxin] + 4 H2O. It carries out the reaction 2 reduced [adrenodoxin] + cholesterol + O2 + 2 H(+) = (22R)-hydroxycholesterol + 2 oxidized [adrenodoxin] + H2O. The catalysed reaction is (22R)-hydroxycholesterol + 2 reduced [adrenodoxin] + O2 + 2 H(+) = (20R,22R)-20,22-dihydroxycholesterol + 2 oxidized [adrenodoxin] + H2O. It catalyses the reaction (20R,22R)-20,22-dihydroxycholesterol + 2 reduced [adrenodoxin] + O2 + 2 H(+) = 4-methylpentanal + pregnenolone + 2 oxidized [adrenodoxin] + 2 H2O. It functions in the pathway lipid metabolism; C21-steroid hormone metabolism. The protein operates within steroid metabolism; cholesterol metabolism. In terms of biological role, a cytochrome P450 monooxygenase that catalyzes the side-chain hydroxylation and cleavage of cholesterol to pregnenolone, the precursor of most steroid hormones. Catalyzes three sequential oxidation reactions of cholesterol, namely the hydroxylation at C22 followed with the hydroxylation at C20 to yield 20R,22R-hydroxycholesterol that is further cleaved between C20 and C22 to yield the C21-steroid pregnenolone and 4-methylpentanal. Mechanistically, uses molecular oxygen inserting one oxygen atom into a substrate and reducing the second into a water molecule. Two electrons are provided by NADPH via a two-protein mitochondrial transfer system comprising flavoprotein FDXR (adrenodoxin/ferredoxin reductase) and nonheme iron-sulfur protein FDX1 or FDX2 (adrenodoxin/ferredoxin). This Sus scrofa (Pig) protein is Cholesterol side-chain cleavage enzyme, mitochondrial (CYP11A1).